A 498-amino-acid chain; its full sequence is uncharacterized protein (498 aa).

Disordered stretches follow at residues 1 to 48 (MSND…ARPK), 99 to 134 (NDLH…GNSK), and 190 to 209 (NSEN…TSSN). Residues 35–44 (ELSTPKQVNQ) are compositionally biased toward polar residues. Over residues 99–110 (NDLHPLDNDSTR) the composition is skewed to basic and acidic residues. Residues 111 to 126 (TSKTLKNSSEVLTASK) are compositionally biased toward polar residues.

This is an uncharacterized protein from Schizosaccharomyces pombe (strain 972 / ATCC 24843) (Fission yeast).